The following is a 354-amino-acid chain: Methylthioribose-1-phosphate isomerase (354 aa).

Substrate contacts are provided by residues 49–51 (RGA), Arg-92, and Gln-199. The active-site Proton donor is the Asp-240. 250–251 (NK) is a substrate binding site.

The protein belongs to the eIF-2B alpha/beta/delta subunits family. MtnA subfamily.

The enzyme catalyses 5-(methylsulfanyl)-alpha-D-ribose 1-phosphate = 5-(methylsulfanyl)-D-ribulose 1-phosphate. It functions in the pathway amino-acid biosynthesis; L-methionine biosynthesis via salvage pathway; L-methionine from S-methyl-5-thio-alpha-D-ribose 1-phosphate: step 1/6. In terms of biological role, catalyzes the interconversion of methylthioribose-1-phosphate (MTR-1-P) into methylthioribulose-1-phosphate (MTRu-1-P). This chain is Methylthioribose-1-phosphate isomerase, found in Koribacter versatilis (strain Ellin345).